Consider the following 193-residue polypeptide: Acyl carrier protein phosphodiesterase (193 aa).

It belongs to the AcpH family.

The enzyme catalyses holo-[ACP] + H2O = apo-[ACP] + (R)-4'-phosphopantetheine + H(+). In terms of biological role, converts holo-ACP to apo-ACP by hydrolytic cleavage of the phosphopantetheine prosthetic group from ACP. This chain is Acyl carrier protein phosphodiesterase, found in Escherichia coli O7:K1 (strain IAI39 / ExPEC).